The following is a 428-amino-acid chain: Adenylosuccinate synthetase (428 aa).

GTP contacts are provided by residues G12–K18 and G40–T42. Residue D13 is the Proton acceptor of the active site. Mg(2+) is bound by residues D13 and G40. IMP is bound by residues D13–K16, N38–H41, T128, R142, Q223, T238, and R302. H41 acts as the Proton donor in catalysis. T298–R304 is a binding site for substrate. Residues R304, S330 to D332, and S412 to G414 contribute to the GTP site.

It belongs to the adenylosuccinate synthetase family. Homodimer. It depends on Mg(2+) as a cofactor.

Its subcellular location is the cytoplasm. It catalyses the reaction IMP + L-aspartate + GTP = N(6)-(1,2-dicarboxyethyl)-AMP + GDP + phosphate + 2 H(+). The protein operates within purine metabolism; AMP biosynthesis via de novo pathway; AMP from IMP: step 1/2. Functionally, plays an important role in the de novo pathway of purine nucleotide biosynthesis. Catalyzes the first committed step in the biosynthesis of AMP from IMP. The sequence is that of Adenylosuccinate synthetase from Shouchella clausii (strain KSM-K16) (Alkalihalobacillus clausii).